The following is a 75-amino-acid chain: Dermaseptin-DA2 (75 aa).

A signal peptide spans methionine 1–cysteine 22. Residues glutamate 23–glutamate 42 constitute a propeptide that is removed on maturation.

Belongs to the frog skin active peptide (FSAP) family. Dermaseptin subfamily. In terms of tissue distribution, expressed by the skin glands.

The protein localises to the secreted. Functionally, possesses a potent antimicrobial activity against Gram-positive and Gram-negative bacteria. Probably acts by disturbing membrane functions with its amphipathic structure. This Agalychnis dacnicolor (Giant Mexican leaf frog) protein is Dermaseptin-DA2.